Reading from the N-terminus, the 370-residue chain is Isopentenyl-diphosphate delta-isomerase (370 aa).

Substrate is bound at residue 8 to 9 (RK). FMN contacts are provided by residues threonine 65, 66 to 68 (GMT), serine 99, and asparagine 127. Residue 99–101 (SQR) coordinates substrate. Position 166 (glutamine 166) interacts with substrate. Residue glutamate 167 participates in Mg(2+) binding. Residues lysine 198, serine 223, threonine 228, 277–279 (GMR), and 298–299 (AL) contribute to the FMN site.

The protein belongs to the IPP isomerase type 2 family. As to quaternary structure, homooctamer. Dimer of tetramers. FMN serves as cofactor. It depends on NADPH as a cofactor. Mg(2+) is required as a cofactor.

It localises to the cytoplasm. The catalysed reaction is isopentenyl diphosphate = dimethylallyl diphosphate. Involved in the biosynthesis of isoprenoids. Catalyzes the 1,3-allylic rearrangement of the homoallylic substrate isopentenyl (IPP) to its allylic isomer, dimethylallyl diphosphate (DMAPP). The sequence is that of Isopentenyl-diphosphate delta-isomerase from Pyrococcus abyssi (strain GE5 / Orsay).